The sequence spans 459 residues: Taurine--pyruvate aminotransferase (459 aa).

Lysine 287 carries the post-translational modification N6-(pyridoxal phosphate)lysine.

It belongs to the class-III pyridoxal-phosphate-dependent aminotransferase family. Pyridoxal 5'-phosphate is required as a cofactor.

Its subcellular location is the cytoplasm. The enzyme catalyses taurine + pyruvate = sulfoacetaldehyde + L-alanine. The protein operates within organosulfur degradation; taurine degradation via aerobic pathway; acetyl phosphate and sulfite from taurine: step 1/2. Its function is as follows. Catalyzes the degradation of taurine into alanine and sulfoacetaldehyde. The protein is Taurine--pyruvate aminotransferase of Rhodobacter capsulatus (strain ATCC BAA-309 / NBRC 16581 / SB1003).